Reading from the N-terminus, the 89-residue chain is Large ribosomal subunit protein bL31B (89 aa).

It belongs to the bacterial ribosomal protein bL31 family. Type B subfamily. In terms of assembly, part of the 50S ribosomal subunit.

The chain is Large ribosomal subunit protein bL31B from Aeromonas hydrophila subsp. hydrophila (strain ATCC 7966 / DSM 30187 / BCRC 13018 / CCUG 14551 / JCM 1027 / KCTC 2358 / NCIMB 9240 / NCTC 8049).